A 115-amino-acid polypeptide reads, in one-letter code: Meiotically up-regulated gene 168 protein (115 aa).

The interval S82–S115 is disordered. Residues P99 to I109 show a composition bias toward polar residues.

The protein resides in the nucleus. Its function is as follows. Has a role in meiosis. This Schizosaccharomyces pombe (strain 972 / ATCC 24843) (Fission yeast) protein is Meiotically up-regulated gene 168 protein (mug168).